A 132-amino-acid chain; its full sequence is Nuclear transition protein 2 (132 aa).

Over residues 1-20 (MDTKTQSLPNTHAQPHSNSR) the composition is skewed to polar residues. The disordered stretch occupies residues 1–132 (MDTKTQSLPN…KRQSSGRKYN (132 aa)). Residues H12, H16, H24, C29, C31, and C35 each coordinate Zn(2+). The span at 37–59 (SRSRSRSCRSRSSSRRPRSHRSP) shows a compositional bias: basic residues. The span at 82-94 (SHQCPSRPVTHSC) shows a compositional bias: polar residues. The short motif at 105–113 (GKVIKRKQV) is the Nuclear localization signal element. A compositionally biased stretch (basic residues) spans 108 to 132 (IKRKQVKRSKQVYKRKRQSSGRKYN). S127 bears the Phosphoserine mark.

Belongs to the nuclear transition protein 2 family. In terms of tissue distribution, testis.

The protein localises to the nucleus. It is found in the nucleolus. The protein resides in the chromosome. Functionally, plays a key role in the replacement of histones to protamine in the elongating spermatids of mammals. In condensing spermatids, loaded onto the nucleosomes, where it promotes the recruitment and processing of protamines, which are responsible for histone eviction. This chain is Nuclear transition protein 2 (TNP2), found in Bos taurus (Bovine).